The sequence spans 190 residues: Transcription factor E (190 aa).

Residues 4–87 (KNKALLEIAK…YWHLETKRLP (84 aa)) enclose the HTH TFE/IIEalpha-type domain. The disordered stretch occupies residues 170-190 (PSPKKEKKKTRAKAKRKTRKK). The span at 174 to 190 (KEKKKTRAKAKRKTRKK) shows a compositional bias: basic residues.

Belongs to the TFE family. Monomer. Interaction with RNA polymerase subunits RpoF and RpoE is necessary for Tfe stimulatory transcription activity. Able to interact with Tbp and RNA polymerase in the absence of DNA promoter. Interacts both with the preinitiation and elongation complexes.

Functionally, transcription factor that plays a role in the activation of archaeal genes transcribed by RNA polymerase. Facilitates transcription initiation by enhancing TATA-box recognition by TATA-box-binding protein (Tbp), and transcription factor B (Tfb) and RNA polymerase recruitment. Not absolutely required for transcription in vitro, but particularly important in cases where Tbp or Tfb function is not optimal. It dynamically alters the nucleic acid-binding properties of RNA polymerases by stabilizing the initiation complex and destabilizing elongation complexes. Seems to translocate with the RNA polymerase following initiation and acts by binding to the non template strand of the transcription bubble in elongation complexes. This chain is Transcription factor E, found in Pyrococcus abyssi (strain GE5 / Orsay).